The chain runs to 70 residues: Large ribosomal subunit protein eL38 (70 aa).

Lys4 is covalently cross-linked (Glycyl lysine isopeptide (Lys-Gly) (interchain with G-Cter in SUMO2)). Position 9 is an N6-acetyllysine; alternate (Lys9). Residue Lys9 forms a Glycyl lysine isopeptide (Lys-Gly) (interchain with G-Cter in SUMO2); alternate linkage. Residue Lys67 is modified to N6-acetyllysine.

The protein belongs to the eukaryotic ribosomal protein eL38 family. Component of the large ribosomal subunit.

The protein resides in the cytoplasm. In terms of biological role, component of the large ribosomal subunit. The ribosome is a large ribonucleoprotein complex responsible for the synthesis of proteins in the cell. This chain is Large ribosomal subunit protein eL38 (RPL38), found in Homo sapiens (Human).